The following is a 263-amino-acid chain: Kallikrein 1-related peptidase b24 (263 aa).

The N-terminal stretch at M1–A17 is a signal peptide. The propeptide at A18–R24 is activation peptide. Residues V25–A260 enclose the Peptidase S1 domain. 5 cysteine pairs are disulfide-bonded: C31–C175, C50–C66, C154–C221, C186–C200, and C211–C236. The active-site Charge relay system is H65. N-linked (GlcNAc...) asparagine glycosylation is found at N69 and N105. Catalysis depends on D122, which acts as the Charge relay system. An N-linked (GlcNAc...) asparagine glycan is attached at N185. The Charge relay system role is filled by S215.

This sequence belongs to the peptidase S1 family. Kallikrein subfamily.

The catalysed reaction is Preferential cleavage of Arg-|-Xaa bonds in small molecule substrates. Highly selective action to release kallidin (lysyl-bradykinin) from kininogen involves hydrolysis of Met-|-Xaa or Leu-|-Xaa.. Glandular kallikreins cleave Met-Lys and Arg-Ser bonds in kininogen to release Lys-bradykinin. In Mus musculus (Mouse), this protein is Kallikrein 1-related peptidase b24 (Klk1b24).